A 389-amino-acid chain; its full sequence is MPMTDFLFTSESVSEGHPDKVADQVSDAILDAILDQDRQSRVACETMVTTGMAVIAGEITTNARVEYPKVVREVIRDIGYNDSAMGFDWETCAVLTSIDRQSPDISQGVTEGAGLFKEQGAGDQGLMFGYACDETSVLMPMPITYAHQLTQRMSEVRKSGLLTFLRPDSKSQVSVQYINDKPVRVDTVVVSSQHAPDVAYETLREALIEEVIKKVVPADMLDENTKFYVNPTGRFVVGGPQGDCGLTGRKIIVDTYGGQGSHGGGAFSGKDPSKVDRSASYMARYVAKNVVAAKLARKCEVQIAYAIGVAEPVSIMVNTFGTGVLPSNEIARIVREEFDMRPAAIIETLDLLRPIYRKTAAYGHFGRELPEFTWERTDRVDSLRGRAGL.

His17 is an ATP binding site. Asp19 is a binding site for Mg(2+). Glu45 contributes to the K(+) binding site. L-methionine is bound by residues Glu58 and Gln101. Residues 101–111 (QSPDISQGVTE) form a flexible loop region. ATP contacts are provided by residues 168-170 (DSK), 234-235 (RF), Asp243, 249-250 (RK), Ala266, and Lys270. Asp243 is an L-methionine binding site. Lys274 provides a ligand contact to L-methionine.

The protein belongs to the AdoMet synthase family. As to quaternary structure, homotetramer; dimer of dimers. Requires Mg(2+) as cofactor. K(+) serves as cofactor.

It localises to the cytoplasm. It catalyses the reaction L-methionine + ATP + H2O = S-adenosyl-L-methionine + phosphate + diphosphate. Its pathway is amino-acid biosynthesis; S-adenosyl-L-methionine biosynthesis; S-adenosyl-L-methionine from L-methionine: step 1/1. Catalyzes the formation of S-adenosylmethionine (AdoMet) from methionine and ATP. The overall synthetic reaction is composed of two sequential steps, AdoMet formation and the subsequent tripolyphosphate hydrolysis which occurs prior to release of AdoMet from the enzyme. This Syntrophotalea carbinolica (strain DSM 2380 / NBRC 103641 / GraBd1) (Pelobacter carbinolicus) protein is S-adenosylmethionine synthase.